We begin with the raw amino-acid sequence, 622 residues long: Leucine-rich repeat and immunoglobulin-like domain-containing nogo receptor-interacting protein 1-B (622 aa).

The N-terminal stretch at 1-43 (MTFLQVTIKMVAREASGHSYLVACWQPILILMLGTVLSGSATG) is a signal peptide. Cystine bridges form between Cys44–Cys50 and Cys48–Cys59. Residues 44–73 (CPSRCECSAQERSVVCHRRKLITLPEGIPI) enclose the LRRNT domain. The Extracellular portion of the chain corresponds to 44–563 (CPSRCECSAQ…FDMKTLIIAT (520 aa)). LRR repeat units follow at residues 74 to 95 (DTRL…EFLN), 98 to 119 (QLED…AFSN), 122 to 143 (GLRT…VFTG), 146 to 167 (NLTR…MFQE), 170 to 191 (NLKE…AFHG), 194 to 215 (SLEQ…AFSH), 218 to 239 (NLLT…SFRR), 266 to 287 (NITT…AIQH), 290 to 311 (YLRF…KMHN), 314 to 335 (RLQA…SFKG), and 338 to 359 (YLRV…AFHS). N-linked (GlcNAc...) asparagine glycosylation is present at Asn146. Asn204 is a glycosylation site (N-linked (GlcNAc...) asparagine). Residues Asn266, Asn276, and Asn295 are each glycosylated (N-linked (GlcNAc...) asparagine). Asn343 carries N-linked (GlcNAc...) asparagine glycosylation. The LRRCT domain maps to 371 to 425 (NPLACDCRLLWVFRRRWRLNFNRQQPSCETPEFLQGKEFKDFPDVLPPNYFTCQK). 3 disulfides stabilise this stretch: Cys375-Cys398, Cys377-Cys423, and Cys448-Cys499. The 103-residue stretch at 413 to 515 (PDVLPPNYFT…GNDTRLAHLH (103 aa)) folds into the Ig-like C2-type domain. N-linked (GlcNAc...) asparagine glycosylation is found at Asn494, Asn507, Asn528, and Asn544. The helical transmembrane segment at 564 to 584 (TMGFISFLGVVLFCLVLLFLW) threads the bilayer. The Cytoplasmic portion of the chain corresponds to 585–622 (SRGKGNAKPNIEIEYVPRKVDGENSPNEGSHKISMKMI).

It localises to the cell membrane. Its function is as follows. May play a role in regulating axonal regeneration and plasticity in the adult central nervous system. This chain is Leucine-rich repeat and immunoglobulin-like domain-containing nogo receptor-interacting protein 1-B (lingo1b), found in Danio rerio (Zebrafish).